The sequence spans 335 residues: Large ribosomal subunit protein uL3 (335 aa).

Residues 1-20 (MATIHRPRRGSLAFSPRKRA) form a disordered region.

Belongs to the universal ribosomal protein uL3 family. In terms of assembly, part of the 50S ribosomal subunit. Forms a cluster with proteins L14 and L24e.

Its function is as follows. One of the primary rRNA binding proteins, it binds directly near the 3'-end of the 23S rRNA, where it nucleates assembly of the 50S subunit. This chain is Large ribosomal subunit protein uL3, found in Methanothrix thermoacetophila (strain DSM 6194 / JCM 14653 / NBRC 101360 / PT) (Methanosaeta thermophila).